The sequence spans 810 residues: Probable dehydratase YbiW (810 aa).

A PFL domain is found at 11 to 682; the sequence is DRIKAHKNAL…QTMATPDGRK (672 aa). The segment at 677–699 is disordered; the sequence is TPDGRKAHTPLAEGASPASGTDH. In terms of domain architecture, Glycine radical spans 689–810; sequence EGASPASGTD…DIIARTEHML (122 aa). Residue glycine 786 is modified to Glycine radical.

It belongs to the glycyl radical enzyme (GRE) family.

In terms of biological role, probably shows dehydratase activity. The polypeptide is Probable dehydratase YbiW (ybiW) (Escherichia coli (strain K12)).